A 572-amino-acid polypeptide reads, in one-letter code: Urease subunit alpha (572 aa).

In terms of domain architecture, Urease spans 134 to 572 (AGIDSHIHLI…AAMNQRYFFG (439 aa)). Residues histidine 139, histidine 141, and lysine 222 each contribute to the Ni(2+) site. Lysine 222 carries the N6-carboxylysine modification. Residue histidine 224 coordinates substrate. Positions 251 and 277 each coordinate Ni(2+). Histidine 325 acts as the Proton donor in catalysis. Aspartate 365 contributes to the Ni(2+) binding site.

This sequence belongs to the metallo-dependent hydrolases superfamily. Urease alpha subunit family. In terms of assembly, heterotrimer of UreA (gamma), UreB (beta) and UreC (alpha) subunits. Three heterotrimers associate to form the active enzyme. It depends on Ni cation as a cofactor. Carboxylation allows a single lysine to coordinate two nickel ions.

Its subcellular location is the cytoplasm. It catalyses the reaction urea + 2 H2O + H(+) = hydrogencarbonate + 2 NH4(+). The protein operates within nitrogen metabolism; urea degradation; CO(2) and NH(3) from urea (urease route): step 1/1. In Yersinia enterocolitica serotype O:8 / biotype 1B (strain NCTC 13174 / 8081), this protein is Urease subunit alpha.